The primary structure comprises 110 residues: Parvalbumin alpha (110 aa).

An N-acetylserine modification is found at Ser-2. Ser-2 and Ser-24 each carry phosphoserine. EF-hand domains follow at residues 39–74 and 78–110; these read KSPE…FSPD and LSVK…VAES. 11 residues coordinate Ca(2+): Asp-52, Asp-54, Ser-56, Phe-58, Glu-60, Glu-63, Asp-91, Asp-93, Asp-95, Lys-97, and Glu-102.

This sequence belongs to the parvalbumin family.

Its function is as follows. In muscle, parvalbumin is thought to be involved in relaxation after contraction. It binds two calcium ions. This chain is Parvalbumin alpha (PVALB), found in Bos taurus (Bovine).